Here is an 876-residue protein sequence, read N- to C-terminus: Alanine--tRNA ligase (876 aa).

At lysine 74 the chain carries N6-acetyllysine. Zn(2+) is bound by residues histidine 564, histidine 568, cysteine 666, and histidine 670.

It belongs to the class-II aminoacyl-tRNA synthetase family. As to quaternary structure, homotetramer. Zn(2+) serves as cofactor.

It is found in the cytoplasm. It catalyses the reaction tRNA(Ala) + L-alanine + ATP = L-alanyl-tRNA(Ala) + AMP + diphosphate. Its function is as follows. Catalyzes the attachment of alanine to tRNA(Ala) in a two-step reaction: alanine is first activated by ATP to form Ala-AMP and then transferred to the acceptor end of tRNA(Ala). Also edits incorrectly charged Ser-tRNA(Ala) and Gly-tRNA(Ala) via its editing domain. This chain is Alanine--tRNA ligase, found in Shigella boydii serotype 18 (strain CDC 3083-94 / BS512).